The sequence spans 260 residues: Indole-3-glycerol phosphate synthase (260 aa).

It belongs to the TrpC family.

The enzyme catalyses 1-(2-carboxyphenylamino)-1-deoxy-D-ribulose 5-phosphate + H(+) = (1S,2R)-1-C-(indol-3-yl)glycerol 3-phosphate + CO2 + H2O. It functions in the pathway amino-acid biosynthesis; L-tryptophan biosynthesis; L-tryptophan from chorismate: step 4/5. The protein is Indole-3-glycerol phosphate synthase of Staphylococcus aureus (strain bovine RF122 / ET3-1).